Reading from the N-terminus, the 73-residue chain is Conotoxin Lt9a (73 aa).

An N-terminal signal peptide occupies residues M1 to V23. A propeptide spanning residues Q24 to S40 is cleaved from the precursor. Disulfide bonds link C48–C62, C53–C64, and C59–C69.

It belongs to the conotoxin P superfamily. As to expression, expressed by the venom duct.

The protein resides in the secreted. In terms of biological role, probable neurotoxin that inhibits ion channels. The protein is Conotoxin Lt9a of Conus litteratus (Lettered cone).